Reading from the N-terminus, the 226-residue chain is EEF1A lysine methyltransferase 1 (226 aa).

S2 carries the N-acetylserine modification. Residue S2 is modified to Phosphoserine.

Belongs to the class I-like SAM-binding methyltransferase superfamily. EFM5 family.

Its subcellular location is the cytoplasm. It carries out the reaction L-lysyl-[protein] + 3 S-adenosyl-L-methionine = N(6),N(6),N(6)-trimethyl-L-lysyl-[protein] + 3 S-adenosyl-L-homocysteine + 3 H(+). Functionally, protein-lysine methyltransferase that selectively catalyzes the trimethylation of EEF1A at 'Lys-79'. This chain is EEF1A lysine methyltransferase 1, found in Bos taurus (Bovine).